The primary structure comprises 550 residues: Glucose-6-phosphate isomerase 1 (550 aa).

The active-site Proton donor is Glu358. Active-site residues include His389 and Lys513.

Belongs to the GPI family.

It is found in the cytoplasm. It carries out the reaction alpha-D-glucose 6-phosphate = beta-D-fructose 6-phosphate. It participates in carbohydrate biosynthesis; gluconeogenesis. The protein operates within carbohydrate degradation; glycolysis; D-glyceraldehyde 3-phosphate and glycerone phosphate from D-glucose: step 2/4. Catalyzes the reversible isomerization of glucose-6-phosphate to fructose-6-phosphate. This is Glucose-6-phosphate isomerase 1 from Streptomyces coelicolor (strain ATCC BAA-471 / A3(2) / M145).